A 628-amino-acid polypeptide reads, in one-letter code: MISSVCVSSYRGRKSGNKPPSKTCLKEEMAKGEASEKIIINVGGTRHETYRSTLRTLPGTRLAWLADPDGGGRPESDGGGAGSSGSSGGGGGGGGCEFFFDRHPGVFAYVLNYYRTGKLHCPADVCGPLFEEELTFWGIDETDVEPCCWMTYRQHRDAEEALDIFESPDGGGGGAGPGDEAGDDERELALQRLGPHEGGSGPGAGSGGCRGWQPRMWALFEDPYSSRAARVVAFASLFFILVSITTFCLETHEAFNIDRNVTEIHRVGNITSVRFRREVETEPILTYIEGVCVMWFTLEFLVRIVCCPDTLDFVKNLLNIIDFVAILPFYLEVGLSGLSSKAARDVLGFLRVVRFVRILRIFKLTRHFVGLRVLGHTLRASTNEFLLLIIFLALGVLIFATMIYYAERIGARPSDPRGNDHTDFKNIPIGFWWAVVTMTTLGYGDMYPKTWSGMLVGALCALAGVLTIAMPVPVIVNNFGMYYSLAMAKQKLPKKRKKHVPRPPQLESPIYCKSEETSPRDSTYSDTSPPAREEGVVERKRADSKQNGDANAVLSDEEGAGLTQPLALAPTPEERRALRRSGTRDRNKKAAACFLLSAGDYACADGSVRKEGNVEPKACVPVSHTCAL.

2 disordered regions span residues 1 to 24 (MISSVCVSSYRGRKSGNKPPSKTC) and 62 to 88 (LAWLADPDGGGRPESDGGGAGSSGSSG). Residues 1–28 (MISSVCVSSYRGRKSGNKPPSKTCLKEE) are inactivation gate. The Cytoplasmic portion of the chain corresponds to 1-230 (MISSVCVSSY…EDPYSSRAAR (230 aa)). A phosphoserine mark is found at Ser-8, Ser-9, Ser-15, and Ser-21. The segment covering 77–88 (DGGGAGSSGSSG) has biased composition (gly residues). 4 residues coordinate Zn(2+): His-120, Cys-126, Cys-147, and Cys-148. A helical membrane pass occupies residues 231–251 (VVAFASLFFILVSITTFCLET). 2 N-linked (GlcNAc...) asparagine glycosylation sites follow: Asn-260 and Asn-269. Residues 282-302 (EPILTYIEGVCVMWFTLEFLV) form a helical membrane-spanning segment. The Cytoplasmic portion of the chain corresponds to 303–316 (RIVCCPDTLDFVKN). The chain crosses the membrane as a helical span at residues 317–337 (LLNIIDFVAILPFYLEVGLSG). Residues 349-368 (FLRVVRFVRILRIFKLTRHF) form a helical; Voltage-sensor membrane-spanning segment. Residues 369-384 (VGLRVLGHTLRASTNE) are Cytoplasmic-facing. Residues 385–405 (FLLLIIFLALGVLIFATMIYY) traverse the membrane as a helical segment. Residues Thr-440, Leu-441, Gly-442, and Tyr-443 each contribute to the K(+) site. Residues 440–445 (TLGYGD) carry the Selectivity filter motif. A helical transmembrane segment spans residues 456 to 476 (VGALCALAGVLTIAMPVPVIV). Residues 477-628 (NNFGMYYSLA…CVPVSHTCAL (152 aa)) are Cytoplasmic-facing. Residues 493 to 584 (PKKRKKHVPR…RRALRRSGTR (92 aa)) are disordered. Positions 531–546 (AREEGVVERKRADSKQ) are enriched in basic and acidic residues.

Belongs to the potassium channel family. C (Shaw) (TC 1.A.1.2) subfamily. Kv3.4/KCNC4 sub-subfamily. In terms of assembly, homotetramer. Heterotetramer of potassium channel proteins. In terms of processing, phosphorylation of serine residues in the inactivation gate inhibits rapid channel closure.

Its subcellular location is the membrane. It catalyses the reaction K(+)(in) = K(+)(out). Its function is as follows. Voltage-gated potassium channel that opens in response to the voltage difference across the membrane, forming a potassium-selective channel through which potassium ions pass in accordance with their electrochemical gradient. The channel displays rapid activation and inactivation kinetics. This Mus musculus (Mouse) protein is Voltage-gated potassium channel KCNC4.